The primary structure comprises 370 residues: Queuine tRNA-ribosyltransferase (370 aa).

Asp-89 (proton acceptor) is an active-site residue. Substrate contacts are provided by residues 89–93 (DSGGF), Asp-143, Gln-187, and Gly-214. The interval 245–251 (GVGKPED) is RNA binding. Asp-264 (nucleophile) is an active-site residue. The RNA binding; important for wobble base 34 recognition stretch occupies residues 269–273 (TRNAR). Residues Cys-302, Cys-304, Cys-307, and His-333 each contribute to the Zn(2+) site.

Belongs to the queuine tRNA-ribosyltransferase family. Homodimer. Within each dimer, one monomer is responsible for RNA recognition and catalysis, while the other monomer binds to the replacement base PreQ1. Zn(2+) serves as cofactor.

It carries out the reaction 7-aminomethyl-7-carbaguanine + guanosine(34) in tRNA = 7-aminomethyl-7-carbaguanosine(34) in tRNA + guanine. Its pathway is tRNA modification; tRNA-queuosine biosynthesis. Its function is as follows. Catalyzes the base-exchange of a guanine (G) residue with the queuine precursor 7-aminomethyl-7-deazaguanine (PreQ1) at position 34 (anticodon wobble position) in tRNAs with GU(N) anticodons (tRNA-Asp, -Asn, -His and -Tyr). Catalysis occurs through a double-displacement mechanism. The nucleophile active site attacks the C1' of nucleotide 34 to detach the guanine base from the RNA, forming a covalent enzyme-RNA intermediate. The proton acceptor active site deprotonates the incoming PreQ1, allowing a nucleophilic attack on the C1' of the ribose to form the product. After dissociation, two additional enzymatic reactions on the tRNA convert PreQ1 to queuine (Q), resulting in the hypermodified nucleoside queuosine (7-(((4,5-cis-dihydroxy-2-cyclopenten-1-yl)amino)methyl)-7-deazaguanosine). This is Queuine tRNA-ribosyltransferase from Baumannia cicadellinicola subsp. Homalodisca coagulata.